We begin with the raw amino-acid sequence, 121 residues long: Small ribosomal subunit protein uS13 (121 aa).

The interval 97–121 (PVRGQKTHSNARTRKGPRASRIKKK) is disordered. The segment covering 101-121 (QKTHSNARTRKGPRASRIKKK) has biased composition (basic residues).

This sequence belongs to the universal ribosomal protein uS13 family. Part of the 30S ribosomal subunit. Forms a loose heterodimer with protein S19. Forms two bridges to the 50S subunit in the 70S ribosome.

Its function is as follows. Located at the top of the head of the 30S subunit, it contacts several helices of the 16S rRNA. In the 70S ribosome it contacts the 23S rRNA (bridge B1a) and protein L5 of the 50S subunit (bridge B1b), connecting the 2 subunits; these bridges are implicated in subunit movement. Contacts the tRNAs in the A and P-sites. The chain is Small ribosomal subunit protein uS13 from Kosmotoga olearia (strain ATCC BAA-1733 / DSM 21960 / TBF 19.5.1).